Reading from the N-terminus, the 292-residue chain is Ornithine decarboxylase antizyme (292 aa).

Belongs to the ODC antizyme family. Interacts with ODC/SPE1 and thereby sterically blocks ODC homodimerization.

In terms of biological role, ornithine decarboxylase (ODC) antizyme protein that negatively regulates ODC activity and intracellular polyamine biosynthesis in response to increased intracellular polyamine levels. Binds to ODC/SPE1 monomers, inhibiting the assembly of the functional ODC homodimer, and targets the monomers for ubiquitin-independent proteolytic destruction by the 26S proteasome. This chain is Ornithine decarboxylase antizyme (OAZ1), found in Saccharomyces cerevisiae (strain ATCC 204508 / S288c) (Baker's yeast).